The primary structure comprises 91 residues: MSITTERKQQLIKEYAITENDTGSSAVQCAILTERINNLTEHFKSNHKDHTSRRGLLILVGRRRRLLNYIKKNNVSKYLDLISKLGIRKIK.

It belongs to the universal ribosomal protein uS15 family. In terms of assembly, part of the 30S ribosomal subunit. Forms a bridge to the 50S subunit in the 70S ribosome, contacting the 23S rRNA.

Its function is as follows. One of the primary rRNA binding proteins, it binds directly to 16S rRNA where it helps nucleate assembly of the platform of the 30S subunit by binding and bridging several RNA helices of the 16S rRNA. In terms of biological role, forms an intersubunit bridge (bridge B4) with the 23S rRNA of the 50S subunit in the ribosome. In Rickettsia africae (strain ESF-5), this protein is Small ribosomal subunit protein uS15.